A 317-amino-acid chain; its full sequence is Flavin-dependent thymidylate synthase (317 aa).

S46 is a binding site for FAD. The segment at F55–T166 is insert. A ThyX domain is found at A100 to I317. Residues Q178–R181, E189–R193, and R259 contribute to the dUMP site. FAD is bound by residues R181–R183 and E189. The ThyX motif signature appears at R181–S191. N281 contributes to the FAD binding site. R286 contacts dUMP. R286 (involved in ionization of N3 of dUMP, leading to its activation) is an active-site residue.

This sequence belongs to the thymidylate synthase ThyX family. As to quaternary structure, homotetramer. FAD serves as cofactor.

It carries out the reaction dUMP + (6R)-5,10-methylene-5,6,7,8-tetrahydrofolate + NADPH + H(+) = dTMP + (6S)-5,6,7,8-tetrahydrofolate + NADP(+). It participates in pyrimidine metabolism; dTTP biosynthesis. Functionally, catalyzes the reductive methylation of 2'-deoxyuridine-5'-monophosphate (dUMP) to 2'-deoxythymidine-5'-monophosphate (dTMP) while utilizing 5,10-methylenetetrahydrofolate (mTHF) as the methyl donor, and NADPH and FADH(2) as the reductant. The protein is Flavin-dependent thymidylate synthase of Aquifex aeolicus (strain VF5).